Here is a 72-residue protein sequence, read N- to C-terminus: Translation initiation factor IF-1 (72 aa).

The region spanning 1-72 is the S1-like domain; sequence MAKDDVIQMQ…SRARIVFRAK (72 aa).

It belongs to the IF-1 family. As to quaternary structure, component of the 30S ribosomal translation pre-initiation complex which assembles on the 30S ribosome in the order IF-2 and IF-3, IF-1 and N-formylmethionyl-tRNA(fMet); mRNA recruitment can occur at any time during PIC assembly.

The protein resides in the cytoplasm. Functionally, one of the essential components for the initiation of protein synthesis. Stabilizes the binding of IF-2 and IF-3 on the 30S subunit to which N-formylmethionyl-tRNA(fMet) subsequently binds. Helps modulate mRNA selection, yielding the 30S pre-initiation complex (PIC). Upon addition of the 50S ribosomal subunit IF-1, IF-2 and IF-3 are released leaving the mature 70S translation initiation complex. This is Translation initiation factor IF-1 from Burkholderia thailandensis (strain ATCC 700388 / DSM 13276 / CCUG 48851 / CIP 106301 / E264).